The primary structure comprises 174 residues: Adenine phosphoribosyltransferase (174 aa).

It belongs to the purine/pyrimidine phosphoribosyltransferase family. As to quaternary structure, homodimer.

Its subcellular location is the cytoplasm. It catalyses the reaction AMP + diphosphate = 5-phospho-alpha-D-ribose 1-diphosphate + adenine. It participates in purine metabolism; AMP biosynthesis via salvage pathway; AMP from adenine: step 1/1. Functionally, catalyzes a salvage reaction resulting in the formation of AMP, that is energically less costly than de novo synthesis. The sequence is that of Adenine phosphoribosyltransferase from Mycolicibacterium vanbaalenii (strain DSM 7251 / JCM 13017 / BCRC 16820 / KCTC 9966 / NRRL B-24157 / PYR-1) (Mycobacterium vanbaalenii).